Here is a 228-residue protein sequence, read N- to C-terminus: 2,3-bisphosphoglycerate-dependent phosphoglycerate mutase (228 aa).

Residues 8 to 15 (RHGQSVWN), 21 to 22 (TG), Arg-60, 87 to 90 (ERHY), Lys-98, 114 to 115 (RR), and 183 to 184 (GN) contribute to the substrate site. His-9 acts as the Tele-phosphohistidine intermediate in catalysis. Glu-87 functions as the Proton donor/acceptor in the catalytic mechanism.

It belongs to the phosphoglycerate mutase family. BPG-dependent PGAM subfamily.

The catalysed reaction is (2R)-2-phosphoglycerate = (2R)-3-phosphoglycerate. The protein operates within carbohydrate degradation; glycolysis; pyruvate from D-glyceraldehyde 3-phosphate: step 3/5. Catalyzes the interconversion of 2-phosphoglycerate and 3-phosphoglycerate. The protein is 2,3-bisphosphoglycerate-dependent phosphoglycerate mutase of Staphylococcus saprophyticus subsp. saprophyticus (strain ATCC 15305 / DSM 20229 / NCIMB 8711 / NCTC 7292 / S-41).